We begin with the raw amino-acid sequence, 217 residues long: Adenylate kinase (217 aa).

Residue 10–15 (GAGKGT) participates in ATP binding. An NMP region spans residues 30-59 (STGDIFRKNVADDTPLGRLAKQYMDAGDLV). Residues T31, R36, 57 to 59 (DLV), 85 to 88 (GFPR), and Q92 contribute to the AMP site. The LID stretch occupies residues 126–163 (GRRTCADCAHVWHVTYDPPTVDGVCDLCGGKLFQREDD). Residue R127 participates in ATP binding. Zn(2+)-binding residues include C130, C133, C150, and C153. Residues R160 and R171 each contribute to the AMP site. G199 serves as a coordination point for ATP.

Belongs to the adenylate kinase family. In terms of assembly, monomer.

The protein resides in the cytoplasm. It catalyses the reaction AMP + ATP = 2 ADP. It participates in purine metabolism; AMP biosynthesis via salvage pathway; AMP from ADP: step 1/1. Catalyzes the reversible transfer of the terminal phosphate group between ATP and AMP. Plays an important role in cellular energy homeostasis and in adenine nucleotide metabolism. The polypeptide is Adenylate kinase (Acidothermus cellulolyticus (strain ATCC 43068 / DSM 8971 / 11B)).